We begin with the raw amino-acid sequence, 90 residues long: Small ribosomal subunit protein bS20 (90 aa).

Positions methionine 1–lysine 29 are disordered.

It belongs to the bacterial ribosomal protein bS20 family.

Functionally, binds directly to 16S ribosomal RNA. The protein is Small ribosomal subunit protein bS20 of Anaeromyxobacter sp. (strain Fw109-5).